The following is a 249-amino-acid chain: Ribosomal RNA small subunit methyltransferase G (249 aa).

S-adenosyl-L-methionine-binding residues include G86, F91, and R178.

It belongs to the methyltransferase superfamily. RNA methyltransferase RsmG family.

Its subcellular location is the cytoplasm. Its function is as follows. Specifically methylates the N7 position of a guanine in 16S rRNA. The sequence is that of Ribosomal RNA small subunit methyltransferase G from Bifidobacterium adolescentis (strain ATCC 15703 / DSM 20083 / NCTC 11814 / E194a).